A 2581-amino-acid polypeptide reads, in one-letter code: Highly reducing polyketide synthase sorA (2581 aa).

Residues 14–436 (SEPIAIIGMS…GSNAHIILED (423 aa)) form the Ketosynthase family 3 (KS3) domain. Catalysis depends on for beta-ketoacyl synthase activity residues Cys-187, His-322, and His-359. The segment at 574 to 868 (VFTGQGAQWN…VVEVGPHTAL (295 aa)) is malonyl-CoA:ACP transacylase (MAT) domain. Residues 966–1103 (HDLLGSIVEG…GLVSVELGES (138 aa)) form an N-terminal hotdog fold region. The tract at residues 966–1270 (HDLLGSIVEG…GFSYQSLGRS (305 aa)) is dehydratase (DH) domain. Positions 966-1273 (HDLLGSIVEG…YQSLGRSTSL (308 aa)) constitute a PKS/mFAS DH domain. His-998 (proton acceptor; for dehydratase activity) is an active-site residue. A C-terminal hotdog fold region spans residues 1119 to 1273 (TRRILPADLF…YQSLGRSTSL (155 aa)). The active-site Proton donor; for dehydratase activity is the Asp-1184. The methyltransferase (CMet) domain stretch occupies residues 1461–1568 (LEVGAATGAI…SSLLKPGGTL (108 aa)). Positions 1873–2184 (LKPDLLVFGD…AGDQIGKVVL (312 aa)) are enoyl reductase (ER)domain. The interval 2207-2389 (VSYLIVGGSG…AVSIDLSVVN (183 aa)) is ketoreductase (KR) domain. The region spanning 2497 to 2574 (DAVRVVGTAI…QLAIDVVDRS (78 aa)) is the Carrier domain. O-(pantetheine 4'-phosphoryl)serine is present on Ser-2534.

It participates in secondary metabolite biosynthesis. Functionally, highly reducing polyketide synthase; part of the gene cluster that mediates the biosynthesis of sorbicillinoids, a diverse group of yellow secondary metabolites that restrict growth of competing pathogenic fungi but not of bacteria. Sorbicillinoids biosynthesis requires the action of two PKSs. SorA iteratively combines three acetyl units and the growing chain is modified by the ketoacyl reductase subunit, and optional by the enoyl reductase subunit in the second cycle. The polyketide is then handed over to the PKS SorB, which adds three more acetyl units, and two methyl groups. SorB releases an aldehyde, which undergoes spontaneous cyclization resulting in the formation of sorbicillin or 2',3'-dihydrosorbicillin. The monooxygenase sorC oxidizes sorbicillin and 2',3'-dihydrosorbicillin to 2',3'-dihydrosorbicillinol and sorbicillinol, respectively. The oxidoreductase sorD further converts sorbicillinol into oxosorbicillinol. Sorbicillinol is the building block for the other sorbicillinoids such as disorbicillinol, bisvertinolon, and dihydrobisvertinolone. This chain is Highly reducing polyketide synthase sorA, found in Penicillium rubens (strain ATCC 28089 / DSM 1075 / NRRL 1951 / Wisconsin 54-1255) (Penicillium chrysogenum).